The sequence spans 627 residues: Siderophore iron transporter ARN1 (627 aa).

Topologically, residues 1–70 (MESVHSRDPV…TEIIGSAYNK (70 aa)) are extracellular. Residues 71–91 (WYLQAILLLSAFICGYGYGLD) form a helical membrane-spanning segment. At 92–110 (GNIRYIYTGYATSSYSEHS) the chain is on the cytoplasmic side. A helical transmembrane segment spans residues 111–131 (LLSTINVINAVVSAASQIIYA). The Extracellular portion of the chain corresponds to 132–135 (RLSD). The helical transmembrane segment at 136–156 (VFGRLYLFISAVILYVVGTII) threads the bilayer. Residues 157–167 (QSQAYDVQRYA) lie on the Cytoplasmic side of the membrane. Residues 168–188 (AGAIFYNAGYVGVILILLIIL) traverse the membrane as a helical segment. Residues 189 to 197 (SDFSSLKWR) are Extracellular-facing. The helical transmembrane segment at 198–218 (LLYQFVPTWPFIINTWIAGNI) threads the bilayer. Over 219-231 (TSRANPVVNWSWD) the chain is Cytoplasmic. The helical transmembrane segment at 232 to 252 (VGMWAFIFPLSCVPIVLCMLH) threads the bilayer. The Extracellular portion of the chain corresponds to 253-290 (MQWRARKTPEWHALKGQKSYYQEHGFIKILKQLFWMLD). The chain crosses the membrane as a helical span at residues 291–311 (VVGVLLMGCSLGCILVPLTLA). At 312–323 (GGVKTTWNDSRL) the chain is on the cytoplasmic side. A helical transmembrane segment spans residues 324–344 (IGPFVLGFVLIPILWIWEYRF). Topologically, residues 345 to 367 (ARDPILPYRLVKDRAVWSSMGIS) are extracellular. Residues 368–388 (FLIDFIYYMAADYLYTVMIVA) traverse the membrane as a helical segment. At 389-398 (VNESVKSATR) the chain is on the cytoplasmic side. A helical membrane pass occupies residues 399-419 (IATLSSFVSTVASPFFALLVT). The Extracellular portion of the chain corresponds to 420-424 (RCTRL). The chain crosses the membrane as a helical span at residues 425–445 (KPFIMFGCALWMVAMGLLYHF). Over 446 to 454 (RGGSQSHSG) the chain is Cytoplasmic. The chain crosses the membrane as a helical span at residues 455–475 (IIGALCVWGVGTTLFTYPVTV). Residues 476 to 563 (SVQSAVSHEN…LMNAYKYVQR (88 aa)) lie on the Extracellular side of the membrane. Residues 564–584 (LETIVALVFCVPLIAFSLCLR) form a helical membrane-spanning segment. The Cytoplasmic segment spans residues 585 to 627 (DPKLTDTVAVEYIEDGEYVDTKDNDPILDWFEKLPSKFTFKRE).

Belongs to the major facilitator superfamily.

It localises to the cell membrane. It is found in the endosome membrane. Functionally, involved in the transport of siderophore ferrichrome and so has a role in iron homeostasis. This chain is Siderophore iron transporter ARN1 (ARN1), found in Saccharomyces cerevisiae (strain ATCC 204508 / S288c) (Baker's yeast).